We begin with the raw amino-acid sequence, 407 residues long: Gonadotropin-releasing hormone receptor (407 aa).

Over 1-36 the chain is Extracellular; sequence MDYLNDSMFNNMTYNITSTPLPDAPRFDNVYVSKLC. N-linked (GlcNAc...) asparagine glycosylation is found at asparagine 5, asparagine 11, and asparagine 15. A helical membrane pass occupies residues 37–57; sequence VLGTVFVISFFGNTLVIIQIF. Topologically, residues 58–69 are cytoplasmic; the sequence is RIRGSRSTIQSL. Residues 70–90 traverse the membrane as a helical segment; the sequence is ILNLAIADLMVSFFNILMDII. Over 91–105 the chain is Extracellular; the sequence is WSATVEWLAGNTMCK. Cysteine 104 and cysteine 183 form a disulfide bridge. The helical transmembrane segment at 106 to 126 threads the bilayer; it reads IMKYLTVFGLHLSTYITVSIA. Residues 127–147 are Cytoplasmic-facing; the sequence is LDRCFAILSPMSRSKAPLRVR. A helical membrane pass occupies residues 148 to 168; the sequence is IMITMAWVLSAIFSIPQAVIF. Residues 169-199 are Extracellular-facing; it reads QEQRKMFRQGMFHQCRDSYNALWQKQLYSAS. Residues 200–220 traverse the membrane as a helical segment; that stretch reads SLILLFVIPLIIMVTSYLLIL. Topologically, residues 221 to 268 are cytoplasmic; sequence KTIVKTSRQFHDTPISPTSMSCYSVNHGQIRTHLFERARKRSSRMSAV. A helical transmembrane segment spans residues 269 to 289; that stretch reads IVAAFILCWTPYYIIFLGFAF. The Extracellular segment spans residues 290 to 298; that stretch reads FQWDNSRTV. Residues 299-319 form a helical membrane-spanning segment; sequence IYFFTLGTSNCMLNPLIYGAF. The Cytoplasmic portion of the chain corresponds to 320 to 407; sequence TIYKVHRGRS…NGKMPTKPPG (88 aa). Residues 377–407 form a disordered region; the sequence is SLTNPHQPVRPSPGINSTTSPNGKMPTKPPG.

The protein belongs to the G-protein coupled receptor 1 family. In terms of tissue distribution, widely expressed in peripheral nervous tissue, gonadal tissue and brain. In the brain, expression is high in the palliovisceral lobe and superior buccal lobe but low in the subvertical lobe, superior and inferior frontal lobe, posterior brachial lobe and pedal lobe. Expressed in stomach, rectum, aorta, heart, salivary gland, branchia, pancreas, radula retractor muscle, branchial vessel but not in white body, esophagus, liver and kidney.

It is found in the cell membrane. Its function is as follows. Receptor for gonadotropin releasing hormone (GnRH) that mediates the action of GnRH to stimulate the secretion of the gonadotropic hormones luteinizing hormone (LH) and follicle-stimulating hormone (FSH). This receptor mediates its action by association with G-proteins that activate a phosphatidylinositol-calcium second messenger system. Ligand interaction triggers steroidogenesis in spermatozoa and follicles. Appears to be involved in contraction of the radula retractor muscle. The protein is Gonadotropin-releasing hormone receptor of Octopus vulgaris (Common octopus).